We begin with the raw amino-acid sequence, 368 residues long: RNA polymerase sigma factor SigA (368 aa).

A disordered region spans residues 69-90; the sequence is LVNEKDSSDTDEKLNPSDLSAP. The span at 71-83 shows a compositional bias: basic and acidic residues; it reads NEKDSSDTDEKLN. Positions 135–205 are sigma-70 factor domain-2; that stretch reads LAEANLRLVV…TRAIADQART (71 aa). The Interaction with polymerase core subunit RpoC motif lies at 159–162; that stretch reads DLIQ. The tract at residues 214-290 is sigma-70 factor domain-3; the sequence is ETINKLIRVQ…DQEAQSPSDH (77 aa). The segment at 303 to 356 is sigma-70 factor domain-4; the sequence is VLDTLTDREENVLRLRFGLDDGRTRTLEEVGKVFGVTRERIRQIEAKALRKLRH. The segment at residues 329–348 is a DNA-binding region (H-T-H motif); the sequence is LEEVGKVFGVTRERIRQIEA.

This sequence belongs to the sigma-70 factor family. RpoD/SigA subfamily. Interacts transiently with the RNA polymerase catalytic core.

Its subcellular location is the cytoplasm. Its function is as follows. Sigma factors are initiation factors that promote the attachment of RNA polymerase to specific initiation sites and are then released. This sigma factor is the primary sigma factor during exponential growth. The sequence is that of RNA polymerase sigma factor SigA from Staphylococcus aureus (strain N315).